The following is a 236-amino-acid chain: 5'-methylthioadenosine/S-adenosylhomocysteine nucleosidase (236 aa).

Glu12 (proton acceptor) is an active-site residue. Substrate contacts are provided by residues Gly78, Ile153, and 174-175 (ME). Asp198 (proton donor) is an active-site residue.

This sequence belongs to the PNP/UDP phosphorylase family. MtnN subfamily.

It catalyses the reaction S-adenosyl-L-homocysteine + H2O = S-(5-deoxy-D-ribos-5-yl)-L-homocysteine + adenine. The catalysed reaction is S-methyl-5'-thioadenosine + H2O = 5-(methylsulfanyl)-D-ribose + adenine. It carries out the reaction 5'-deoxyadenosine + H2O = 5-deoxy-D-ribose + adenine. The protein operates within amino-acid biosynthesis; L-methionine biosynthesis via salvage pathway; S-methyl-5-thio-alpha-D-ribose 1-phosphate from S-methyl-5'-thioadenosine (hydrolase route): step 1/2. Catalyzes the irreversible cleavage of the glycosidic bond in both 5'-methylthioadenosine (MTA) and S-adenosylhomocysteine (SAH/AdoHcy) to adenine and the corresponding thioribose, 5'-methylthioribose and S-ribosylhomocysteine, respectively. Also cleaves 5'-deoxyadenosine, a toxic by-product of radical S-adenosylmethionine (SAM) enzymes, into 5-deoxyribose and adenine. This is 5'-methylthioadenosine/S-adenosylhomocysteine nucleosidase from Shewanella sp. (strain MR-7).